The sequence spans 150 residues: Lipoprotein signal peptidase (150 aa).

Helical transmembrane passes span 8–28 (FYAL…LAHA), 58–78 (GFSW…GWFL), and 81–101 (TTGS…NVFD). Catalysis depends on residues Asp116 and Asp132. Residues 126-146 (VVFNIADLFILAGVFGTFLFL) form a helical membrane-spanning segment.

This sequence belongs to the peptidase A8 family.

Its subcellular location is the cell membrane. The enzyme catalyses Release of signal peptides from bacterial membrane prolipoproteins. Hydrolyzes -Xaa-Yaa-Zaa-|-(S,diacylglyceryl)Cys-, in which Xaa is hydrophobic (preferably Leu), and Yaa (Ala or Ser) and Zaa (Gly or Ala) have small, neutral side chains.. It participates in protein modification; lipoprotein biosynthesis (signal peptide cleavage). In terms of biological role, this protein specifically catalyzes the removal of signal peptides from prolipoproteins. The protein is Lipoprotein signal peptidase of Tropheryma whipplei (strain Twist) (Whipple's bacillus).